Reading from the N-terminus, the 950-residue chain is Double-stranded RNA-binding protein Staufen homolog (950 aa).

3 disordered regions span residues 25-168 (VSGA…QQQQ), 202-274 (QQQL…QPST), and 288-342 (VTPV…NTKE). A compositionally biased stretch (low complexity) spans 31-43 (QQRSMMSQQRGGS). The segment covering 45-66 (AINSSKSPYQLQTSSISQFSHL) has biased composition (polar residues). Residues 67–77 (QQQQQQQQQQQ) show a composition bias toward low complexity. Polar residues predominate over residues 78–122 (LVNNYHKQKQMSPDITSHQFSSSTGGGMPTQNGNYQSMSGSSIHT). Low complexity-rich tracts occupy residues 130 to 143 (QLSLQHQHHQYSSQ), 153 to 168 (QQHHYQSQQMTQQQQQ), and 202 to 253 (QQQL…ILQH). The segment covering 254–274 (SPTSGKSLSSAPHGTSVQPST) has biased composition (polar residues). The segment covering 313 to 322 (SGRDSVHVSD) has biased composition (basic and acidic residues). DRBM domains are found at residues 344–411 (TPMC…ETKC), 435–546 (TPTV…ILKN), 578–645 (SEIS…ELRK), and 690–758 (NPIS…LLGY). 2 disordered regions span residues 758-833 (YTKP…HTAS) and 922-950 (DIHPGGDGPQVKKDVLARSGSGMKKDFSK). Residues 765–782 (PTKSSFKNPSTGEAGQTN) show a composition bias toward polar residues. Residues 922–937 (DIHPGGDGPQVKKDVL) show a composition bias toward basic and acidic residues.

Strongly expressed in nervous tissue (at protein level).

The protein resides in the perikaryon. It is found in the cell projection. In terms of biological role, RNA-binding protein which is required for syntaxin location in sensory neurons during long-term synaptic facilitation. Binds to syntaxin mRNA and is required to maintain its accumulation at the axon hillock following neuronal stimulation and at the opposite pole in stable unstimulated sensory neurons. The protein is Double-stranded RNA-binding protein Staufen homolog of Aplysia californica (California sea hare).